Here is a 267-residue protein sequence, read N- to C-terminus: Glucosamine-6-phosphate deaminase (267 aa).

The active-site Proton acceptor; for enolization step is the D76. D145 serves as the catalytic For ring-opening step. H147 (proton acceptor; for ring-opening step) is an active-site residue. Catalysis depends on E152, which acts as the For ring-opening step.

The protein belongs to the glucosamine/galactosamine-6-phosphate isomerase family. Homohexamer.

The protein resides in the cytoplasm. It carries out the reaction alpha-D-glucosamine 6-phosphate + H2O = beta-D-fructose 6-phosphate + NH4(+). It functions in the pathway nucleotide-sugar biosynthesis; UDP-N-acetyl-alpha-D-glucosamine biosynthesis; alpha-D-glucosamine 6-phosphate from D-fructose 6-phosphate: step 1/1. Functionally, catalyzes the reversible conversion of alpha-D-glucosamine 6-phosphate (GlcN-6P) into beta-D-fructose 6-phosphate (Fru-6P) and ammonium ion, a regulatory reaction step in de novo uridine diphosphate-N-acetyl-alpha-D-glucosamine (UDP-GlcNAc) biosynthesis via hexosamine pathway. In Dictyostelium discoideum (Social amoeba), this protein is Glucosamine-6-phosphate deaminase.